The chain runs to 122 residues: Large ribosomal subunit protein uL18 (122 aa).

Belongs to the universal ribosomal protein uL18 family. As to quaternary structure, part of the 50S ribosomal subunit; part of the 5S rRNA/L5/L18/L25 subcomplex. Contacts the 5S and 23S rRNAs.

In terms of biological role, this is one of the proteins that bind and probably mediate the attachment of the 5S RNA into the large ribosomal subunit, where it forms part of the central protuberance. This is Large ribosomal subunit protein uL18 from Citrifermentans bemidjiense (strain ATCC BAA-1014 / DSM 16622 / JCM 12645 / Bem) (Geobacter bemidjiensis).